The following is a 76-amino-acid chain: Small proline-rich protein 4 (76 aa).

Residues 38 to 76 (PKTKDPCVPQAKKQCPARSTTNPAQEKCPAQQDPKCKQK) are disordered.

This sequence belongs to the cornifin (SPRR) family. In terms of processing, cross-linked to membrane proteins by transglutaminase.

Its subcellular location is the cytoplasm. The protein resides in the cell cortex. Its function is as follows. Cross-linked envelope protein of keratinocytes. Involved in UV-induced cornification. This is Small proline-rich protein 4 (Sprr4) from Mus musculus (Mouse).